A 282-amino-acid polypeptide reads, in one-letter code: Eukaryotic translation initiation factor 3 subunit G (282 aa).

The interval 1–27 (MSSSKSLDWADDEDYGTGLPSIQTFDN) is disordered. Phosphoserine occurs at positions 160 and 164. The RRM domain maps to 202 to 280 (ATLRVTNLSD…LILRCEFSKP (79 aa)).

This sequence belongs to the eIF-3 subunit G family. As to quaternary structure, component of the eukaryotic translation initiation factor 3 (eIF-3) complex. The eIF-3 complex appears to include tif32/eif3a, SPAC25G10.08/eif3b, tif33/eif3c, SPBC4C3.07/eif3f, tif35/eif3g and sum1/eif3i. This set of common subunits may also associate exclusively with either moe1/eif3d and int6/eif3e, or with SPAC821.05/eif3h and SPAC1751.03/eif3m. The eIF-3 complex may also include SPAC3A12.13c/eif3j.

It localises to the cytoplasm. In terms of biological role, RNA-binding component of the eukaryotic translation initiation factor 3 (eIF-3) complex, which is involved in protein synthesis of a specialized repertoire of mRNAs and, together with other initiation factors, stimulates binding of mRNA and methionyl-tRNAi to the 40S ribosome. The eIF-3 complex specifically targets and initiates translation of a subset of mRNAs involved in cell proliferation. This subunit can bind 18S rRNA. The protein is Eukaryotic translation initiation factor 3 subunit G (tif35) of Schizosaccharomyces pombe (strain 972 / ATCC 24843) (Fission yeast).